The sequence spans 82 residues: U16-lycotoxin-Ls1b (82 aa).

Positions 1–22 are cleaved as a signal peptide; that stretch reads MSPKVQALLLLVGLITFLEVHA. Positions 23–34 are excised as a propeptide; sequence EEELSETVESER. 4 cysteine pairs are disulfide-bonded: Cys36-Cys51, Cys43-Cys56, Cys50-Cys67, and Cys58-Cys65.

Belongs to the neurotoxin 02 (plectoxin) family. 04 (U16-lycotoxin) subfamily. In terms of tissue distribution, expressed by the venom gland.

It localises to the secreted. The polypeptide is U16-lycotoxin-Ls1b (Lycosa singoriensis (Wolf spider)).